We begin with the raw amino-acid sequence, 165 residues long: Cyclic pyranopterin monophosphate synthase (165 aa).

Substrate is bound by residues 83–85 (FCH) and 120–121 (ME). D135 is a catalytic residue.

It belongs to the MoaC family. As to quaternary structure, homohexamer; trimer of dimers.

It catalyses the reaction (8S)-3',8-cyclo-7,8-dihydroguanosine 5'-triphosphate = cyclic pyranopterin phosphate + diphosphate. The protein operates within cofactor biosynthesis; molybdopterin biosynthesis. Catalyzes the conversion of (8S)-3',8-cyclo-7,8-dihydroguanosine 5'-triphosphate to cyclic pyranopterin monophosphate (cPMP). This chain is Cyclic pyranopterin monophosphate synthase, found in Xanthomonas campestris pv. campestris (strain 8004).